Here is a 205-residue protein sequence, read N- to C-terminus: Large ribosomal subunit protein uL4 (205 aa).

This sequence belongs to the universal ribosomal protein uL4 family. Part of the 50S ribosomal subunit. Contacts proteins L15 and L34.

In terms of biological role, one of the primary rRNA binding proteins, this protein initially binds near the 5'-end of the 23S rRNA. It is important during the early stages of 50S assembly. Functionally, makes multiple contacts with different domains of the 23S rRNA in the assembled 50S subunit. This protein is located close to the polypeptide exit tunnel, and interacts with the modified macrolide azithromycin, which blocks the tunnel. This Deinococcus radiodurans (strain ATCC 13939 / DSM 20539 / JCM 16871 / CCUG 27074 / LMG 4051 / NBRC 15346 / NCIMB 9279 / VKM B-1422 / R1) protein is Large ribosomal subunit protein uL4 (rplD).